Consider the following 417-residue polypeptide: NADH-quinone oxidoreductase subunit D (417 aa).

It belongs to the complex I 49 kDa subunit family. In terms of assembly, NDH-1 is composed of 14 different subunits. Subunits NuoB, C, D, E, F, and G constitute the peripheral sector of the complex.

It is found in the cell inner membrane. The enzyme catalyses a quinone + NADH + 5 H(+)(in) = a quinol + NAD(+) + 4 H(+)(out). NDH-1 shuttles electrons from NADH, via FMN and iron-sulfur (Fe-S) centers, to quinones in the respiratory chain. The immediate electron acceptor for the enzyme in this species is believed to be ubiquinone. Couples the redox reaction to proton translocation (for every two electrons transferred, four hydrogen ions are translocated across the cytoplasmic membrane), and thus conserves the redox energy in a proton gradient. This is NADH-quinone oxidoreductase subunit D from Nitrosomonas eutropha (strain DSM 101675 / C91 / Nm57).